The sequence spans 185 residues: N-alpha-acetyltransferase 30 (185 aa).

The N-acetyltransferase domain maps to 31 to 179 (IEYIPYQGES…DAVRLLLPLN (149 aa)).

It belongs to the acetyltransferase family. MAK3 subfamily.

In terms of biological role, probable catalytic component of a complex displaying alpha (N-terminal) acetyltransferase activity. This Dictyostelium discoideum (Social amoeba) protein is N-alpha-acetyltransferase 30.